Here is a 336-residue protein sequence, read N- to C-terminus: Lipoyl synthase (336 aa).

Residues Cys81, Cys86, Cys92, Cys107, Cys111, Cys114, and Ser323 each contribute to the [4Fe-4S] cluster site. In terms of domain architecture, Radical SAM core spans 93 to 312; it reads FGHGTATFMI…EDYGYELGFS (220 aa).

It belongs to the radical SAM superfamily. Lipoyl synthase family. It depends on [4Fe-4S] cluster as a cofactor.

Its subcellular location is the cytoplasm. It catalyses the reaction [[Fe-S] cluster scaffold protein carrying a second [4Fe-4S](2+) cluster] + N(6)-octanoyl-L-lysyl-[protein] + 2 oxidized [2Fe-2S]-[ferredoxin] + 2 S-adenosyl-L-methionine + 4 H(+) = [[Fe-S] cluster scaffold protein] + N(6)-[(R)-dihydrolipoyl]-L-lysyl-[protein] + 4 Fe(3+) + 2 hydrogen sulfide + 2 5'-deoxyadenosine + 2 L-methionine + 2 reduced [2Fe-2S]-[ferredoxin]. The protein operates within protein modification; protein lipoylation via endogenous pathway; protein N(6)-(lipoyl)lysine from octanoyl-[acyl-carrier-protein]: step 2/2. Catalyzes the radical-mediated insertion of two sulfur atoms into the C-6 and C-8 positions of the octanoyl moiety bound to the lipoyl domains of lipoate-dependent enzymes, thereby converting the octanoylated domains into lipoylated derivatives. The polypeptide is Lipoyl synthase (Stenotrophomonas maltophilia (strain K279a)).